The primary structure comprises 431 residues: STE20-related kinase adapter protein alpha (431 aa).

A phosphoserine mark is found at S2 and S46. The Protein kinase domain occupies 69 to 379; it reads YELLTVIGKG…ASTLLNHSFF (311 aa). A disordered region spans residues 310–347; the sequence is LTMSPSRSVANSGLSDSLTTSTPRPSNGDSPSHPYHRT. A compositionally biased stretch (polar residues) spans 312 to 339; that stretch reads MSPSRSVANSGLSDSLTTSTPRPSNGDS. Phosphothreonine; by LKB1 occurs at positions 329 and 401. T419 carries the post-translational modification Phosphothreonine.

It belongs to the protein kinase superfamily. STE Ser/Thr protein kinase family. STE20 subfamily. As to quaternary structure, component of a trimeric complex composed of STK11/LKB1, STRAD (STRADA or STRADB) and CAB39/MO25 (CAB39/MO25alpha or CAB39L/MO25beta): the complex tethers STK11/LKB1 in the cytoplasm and stimulates its catalytic activity.

It is found in the nucleus. The protein localises to the cytoplasm. Its function is as follows. Pseudokinase which, in complex with CAB39/MO25 (CAB39/MO25alpha or CAB39L/MO25beta), binds to and activates STK11/LKB1. Adopts a closed conformation typical of active protein kinases and binds STK11/LKB1 as a pseudosubstrate, promoting conformational change of STK11/LKB1 in an active conformation. This is STE20-related kinase adapter protein alpha (STRADA) from Pongo abelii (Sumatran orangutan).